A 535-amino-acid polypeptide reads, in one-letter code: Thermosome subunit gamma (535 aa).

It belongs to the TCP-1 chaperonin family. As to quaternary structure, forms a Heterooligomeric complex of two stacked eight-membered rings.

In terms of biological role, molecular chaperone; binds unfolded polypeptides in vitro, and has a weak ATPase activity. In Saccharolobus solfataricus (strain ATCC 35092 / DSM 1617 / JCM 11322 / P2) (Sulfolobus solfataricus), this protein is Thermosome subunit gamma (thsC).